A 160-amino-acid chain; its full sequence is Cytochrome b6-f complex subunit 4 (160 aa).

Transmembrane regions (helical) follow at residues 36-56, 95-115, and 131-151; these read LLYI…GLAV, LLGV…PFLE, and TIFL…ALPI.

It belongs to the cytochrome b family. PetD subfamily. The 4 large subunits of the cytochrome b6-f complex are cytochrome b6, subunit IV (17 kDa polypeptide, petD), cytochrome f and the Rieske protein, while the 4 small subunits are petG, petL, petM and petN. The complex functions as a dimer.

Its subcellular location is the plastid. It localises to the chloroplast thylakoid membrane. Functionally, component of the cytochrome b6-f complex, which mediates electron transfer between photosystem II (PSII) and photosystem I (PSI), cyclic electron flow around PSI, and state transitions. This chain is Cytochrome b6-f complex subunit 4, found in Anthoceros angustus (Hornwort).